A 436-amino-acid chain; its full sequence is 3-ketoacyl-CoA thiolase (436 aa).

Cysteine 99 (acyl-thioester intermediate) is an active-site residue. Catalysis depends on proton acceptor residues histidine 392 and cysteine 422.

This sequence belongs to the thiolase-like superfamily. Thiolase family. As to quaternary structure, heterotetramer of two alpha chains (FadJ) and two beta chains (FadI).

It localises to the cytoplasm. It carries out the reaction an acyl-CoA + acetyl-CoA = a 3-oxoacyl-CoA + CoA. It participates in lipid metabolism; fatty acid beta-oxidation. Its function is as follows. Catalyzes the final step of fatty acid oxidation in which acetyl-CoA is released and the CoA ester of a fatty acid two carbons shorter is formed. The protein is 3-ketoacyl-CoA thiolase of Salmonella heidelberg (strain SL476).